The sequence spans 135 residues: Galectin-1 (135 aa).

Alanine 2 is modified (N-acetylalanine). The Galectin domain maps to 4–135; the sequence is GLVASNLNLK…DFKIKCVAFE (132 aa). N6-acetyllysine occurs at positions 13, 19, and 29. Serine 30 is modified (phosphoserine). A beta-D-galactoside contacts are provided by residues 45–49, histidine 53, asparagine 62, and 69–72; these read HFNPR and WGTE. Lysine 108 carries the N6-acetyllysine; alternate modification. Lysine 108 carries the post-translational modification N6-succinyllysine; alternate. Residue lysine 128 is modified to N6-acetyllysine.

As to quaternary structure, homodimer. Binds LGALS3BP. Interacts with CD2, CD3, CD4, CD6, CD7, CD43, ALCAM and CD45. Interacts with laminin (via poly-N-acetyllactosamine). Interacts with SUSD2. Interacts with cargo receptor TMED10; the interaction mediates the translocation from the cytoplasm into the ERGIC (endoplasmic reticulum-Golgi intermediate compartment) and thereby secretion. Interacts with CD69.

It is found in the secreted. The protein localises to the extracellular space. The protein resides in the extracellular matrix. Its subcellular location is the cytoplasm. Functionally, lectin that binds beta-galactoside and a wide array of complex carbohydrates. Plays a role in regulating apoptosis, cell proliferation and cell differentiation. Inhibits CD45 protein phosphatase activity and therefore the dephosphorylation of Lyn kinase. Strong inducer of T-cell apoptosis. Plays a negative role in Th17 cell differentiation via activation of the receptor CD69. This chain is Galectin-1 (Lgals1), found in Rattus norvegicus (Rat).